Consider the following 670-residue polypeptide: DNA mismatch repair protein MutL (670 aa).

Positions 363 to 451 are disordered; it reads SFDRGRPLSR…RAAGGPASTH (89 aa). Residues 379 to 389 show a composition bias toward basic and acidic residues; the sequence is ERWRERHRPDA.

It belongs to the DNA mismatch repair MutL/HexB family.

Its function is as follows. This protein is involved in the repair of mismatches in DNA. It is required for dam-dependent methyl-directed DNA mismatch repair. May act as a 'molecular matchmaker', a protein that promotes the formation of a stable complex between two or more DNA-binding proteins in an ATP-dependent manner without itself being part of a final effector complex. The polypeptide is DNA mismatch repair protein MutL (Syntrophobacter fumaroxidans (strain DSM 10017 / MPOB)).